We begin with the raw amino-acid sequence, 283 residues long: S-methyl-5'-thioadenosine phosphorylase (283 aa).

Residue T18 coordinates phosphate. K51 carries the N6-acetyllysine modification. Phosphate contacts are provided by residues 60 to 61 (RH) and 93 to 94 (TA). M196 serves as a coordination point for substrate. T197 serves as a coordination point for phosphate. 220-222 (DYD) is a substrate binding site.

This sequence belongs to the PNP/MTAP phosphorylase family. MTAP subfamily. Homotrimer.

It localises to the cytoplasm. Its subcellular location is the nucleus. It catalyses the reaction S-methyl-5'-thioadenosine + phosphate = 5-(methylsulfanyl)-alpha-D-ribose 1-phosphate + adenine. It participates in amino-acid biosynthesis; L-methionine biosynthesis via salvage pathway; S-methyl-5-thio-alpha-D-ribose 1-phosphate from S-methyl-5'-thioadenosine (phosphorylase route): step 1/1. Functionally, catalyzes the reversible phosphorylation of S-methyl-5'-thioadenosine (MTA) to adenine and 5-methylthioribose-1-phosphate. Involved in the breakdown of MTA, a major by-product of polyamine biosynthesis. Responsible for the first step in the methionine salvage pathway after MTA has been generated from S-adenosylmethionine. Has broad substrate specificity with 6-aminopurine nucleosides as preferred substrates. The protein is S-methyl-5'-thioadenosine phosphorylase (Mtap) of Mus musculus (Mouse).